The following is a 431-amino-acid chain: Enolase (431 aa).

Gln-167 serves as a coordination point for (2R)-2-phosphoglycerate. Glu-209 serves as the catalytic Proton donor. Residues Asp-246, Glu-287, and Asp-314 each coordinate Mg(2+). 4 residues coordinate (2R)-2-phosphoglycerate: Lys-339, Arg-368, Ser-369, and Lys-390. Catalysis depends on Lys-339, which acts as the Proton acceptor.

It belongs to the enolase family. Requires Mg(2+) as cofactor.

It is found in the cytoplasm. Its subcellular location is the secreted. The protein resides in the cell surface. It carries out the reaction (2R)-2-phosphoglycerate = phosphoenolpyruvate + H2O. Its pathway is carbohydrate degradation; glycolysis; pyruvate from D-glyceraldehyde 3-phosphate: step 4/5. Catalyzes the reversible conversion of 2-phosphoglycerate (2-PG) into phosphoenolpyruvate (PEP). It is essential for the degradation of carbohydrates via glycolysis. The polypeptide is Enolase (Prochlorococcus marinus (strain MIT 9303)).